The sequence spans 134 residues: ATP synthase epsilon chain (134 aa).

The protein belongs to the ATPase epsilon chain family. F-type ATPases have 2 components, CF(1) - the catalytic core - and CF(0) - the membrane proton channel. CF(1) has five subunits: alpha(3), beta(3), gamma(1), delta(1), epsilon(1). CF(0) has three main subunits: a, b and c.

The protein localises to the cell membrane. Functionally, produces ATP from ADP in the presence of a proton gradient across the membrane. This chain is ATP synthase epsilon chain, found in Ruminococcus albus (strain ATCC 27210 / DSM 20455 / JCM 14654 / NCDO 2250 / 7).